Reading from the N-terminus, the 232-residue chain is Ubiquinone biosynthesis O-methyltransferase (232 aa).

Residues Arg-36, Gly-55, Asp-76, and Leu-120 each contribute to the S-adenosyl-L-methionine site.

The protein belongs to the methyltransferase superfamily. UbiG/COQ3 family.

It catalyses the reaction a 3-demethylubiquinol + S-adenosyl-L-methionine = a ubiquinol + S-adenosyl-L-homocysteine + H(+). The catalysed reaction is a 3-(all-trans-polyprenyl)benzene-1,2-diol + S-adenosyl-L-methionine = a 2-methoxy-6-(all-trans-polyprenyl)phenol + S-adenosyl-L-homocysteine + H(+). It functions in the pathway cofactor biosynthesis; ubiquinone biosynthesis. Its function is as follows. O-methyltransferase that catalyzes the 2 O-methylation steps in the ubiquinone biosynthetic pathway. This chain is Ubiquinone biosynthesis O-methyltransferase, found in Pseudomonas syringae pv. tomato (strain ATCC BAA-871 / DC3000).